Reading from the N-terminus, the 533-residue chain is AAA-ATPase At5g17740 (533 aa).

The chain crosses the membrane as a helical span at residues 11–27; sequence ASMFSTYASMMGYVMII. ATP is bound at residue 252–259; sequence GPPGTGKS.

Belongs to the AAA ATPase family. BCS1 subfamily. It depends on Mg(2+) as a cofactor.

It localises to the membrane. The catalysed reaction is ATP + H2O = ADP + phosphate + H(+). The chain is AAA-ATPase At5g17740 from Arabidopsis thaliana (Mouse-ear cress).